The sequence spans 209 residues: Transmembrane domain-containing protein TMIGD3 (209 aa).

The first 15 residues, Met1 to Ala15, serve as a signal peptide directing secretion. A helical membrane pass occupies residues Ser152 to Leu172. The tract at residues Gln179–Met201 is disordered. Residues Lys187–Met201 show a composition bias toward polar residues.

Its subcellular location is the membrane. The sequence is that of Transmembrane domain-containing protein TMIGD3 (Tmigd3) from Mus musculus (Mouse).